The chain runs to 429 residues: MAQTPPPESAPSTDSEPETALETARRQLQAAAEHVDIADGVIERLTHPTRVVQVSVPVERDDGTVTVYDGYRAQHDDVRGPYKGGLRYHPGVSAEECVGLSMWMTWKCAVMDLPFGGAKGGVVVDPKTLSADEHERLTRRFAAELRDEVGPSQDIPAPDMGTDAQTMAWFMDAYSMQQGETVPGVVTGKPPVAGGSHGRAEAPGRSVAIATREAINYYDIPIDDATVAVQGYGSVGANAALLLDDWGARVVAVSDVNGGVLDTDGLDTHAIPSHGNQPAAVMRHDAPNTLTNEELLELDVDVVIPAAVGNVITAANADRIQADIVVEGANGPTTSAADRILEERAVPVIPDILANAGGVTVSYFEWLQDINRRTWSPERVRDELESEMLSAWNAVRSEVDDGDLSWRDAAYVVALQRIGRAKEARGLWP.

The segment at 1–20 is disordered; sequence MAQTPPPESAPSTDSEPETA. Lys119 is an active-site residue.

The protein belongs to the Glu/Leu/Phe/Val dehydrogenases family. As to quaternary structure, homohexamer.

This Halobacterium salinarum (strain ATCC 700922 / JCM 11081 / NRC-1) (Halobacterium halobium) protein is Glutamate dehydrogenase B (gdhB).